The primary structure comprises 145 residues: Catabolic 3-dehydroquinase (145 aa).

Residue Tyr-24 is the Proton acceptor of the active site. Residues Asn-77, His-83, and Asp-90 each coordinate substrate. The Proton donor role is filled by His-103. Substrate-binding positions include 104–105 (IT) and Arg-114.

Belongs to the type-II 3-dehydroquinase family. As to quaternary structure, homododecamer. Adopts a ring-like structure, composed of an arrangement of two hexameric rings stacked on top of one another.

It catalyses the reaction 3-dehydroquinate = 3-dehydroshikimate + H2O. It functions in the pathway aromatic compound metabolism; 3,4-dihydroxybenzoate biosynthesis; 3,4-dihydroxybenzoate from 3-dehydroquinate: step 1/2. In terms of biological role, is involved in the catabolism of quinate. Allows the utilization of quinate as carbon source via the beta-ketoadipate pathway. This Clavispora lusitaniae (strain ATCC 42720) (Yeast) protein is Catabolic 3-dehydroquinase.